The primary structure comprises 233 residues: uncharacterized protein (233 aa).

Helical transmembrane passes span 4-24 (LAILLSILAIGLILLIINHDT), 35-55 (FGQLVSLGAIATLIGAGILQS), and 66-86 (IAIWLFVVLALVSAYVYRFEL).

The protein resides in the cell membrane. This is an uncharacterized protein from Sinorhizobium sp.